The primary structure comprises 1023 residues: Vacuolar membrane protease (1023 aa).

Residues 1–80 (MRAAGCGGTG…FFRSVFGYRK (80 aa)) are Cytoplasmic-facing. The segment covering 17–48 (KLSRSISQHQPKSMPQASVNSEQNPSVPNSPS) has biased composition (polar residues). The tract at residues 17–59 (KLSRSISQHQPKSMPQASVNSEQNPSVPNSPSAHKPARSQSAQ) is disordered. Residues 81–101 (TSLTFLVALVFAATLLLSWAD) form a helical membrane-spanning segment. Residues 102–425 (SSLDFSVDMP…VVFSVSQVVS (324 aa)) lie on the Vacuolar side of the membrane. Asn-170 and Asn-200 each carry an N-linked (GlcNAc...) asparagine glycan. The Zn(2+) site is built by His-214 and Asp-226. Glu-259 acts as the Proton acceptor in catalysis. Zn(2+)-binding residues include Glu-260, Glu-285, and His-357. A helical membrane pass occupies residues 426–446 (ANIALLVVVPVASLLLLFIIF). The Cytoplasmic portion of the chain corresponds to 447–461 (RCNKGWGFNFVNAIK). The helical transmembrane segment at 462–482 (YPLSLVASVLVLTFVSQVIIV) threads the bilayer. At 483-491 (PSNPFLVNS) the chain is on the vacuolar side. The N-linked (GlcNAc...) asparagine glycan is linked to Asn-490. The helical transmembrane segment at 492-512 (SIGLLVATLFSLFLLLNYIVL) threads the bilayer. Residues 513–529 (NGLNLVFKSFKGHQHDE) are Cytoplasmic-facing. Residues 530–550 (KLIVMCESSFLTWILLLWSTV) form a helical membrane-spanning segment. At 551–564 (KLSHNKFGDDHTGE) the chain is on the vacuolar side. The helical transmembrane segment at 565–585 (LFIPILFSLQAVACFLGFLGW) threads the bilayer. Residues 586–643 (CFKPSKKVKVSREEHQPLLSSNGSNYGTQDDDDSLAPSSSLSLQSGFSENCEVHETKS) are Cytoplasmic-facing. Residues 604-613 (LSSNGSNYGT) show a composition bias toward polar residues. The disordered stretch occupies residues 604–626 (LSSNGSNYGTQDDDDSLAPSSSL). The chain crosses the membrane as a helical span at residues 644 to 664 (FSYDWLVQFLVIVPISSLIIF). The Vacuolar portion of the chain corresponds to 665–687 (NSGSLILNGLNKSIQESLSAQNL). An N-linked (GlcNAc...) asparagine glycan is attached at Asn-675. Residues 688 to 708 (IYKFIQIFVIVWSIPFLPFIF) traverse the membrane as a helical segment. Topologically, residues 709-712 (KLNR) are cytoplasmic. The chain crosses the membrane as a helical span at residues 713 to 733 (IIVLALSLVLLYGFFAVNITD). Topologically, residues 734–1023 (AFNDANPLKL…MVSVTKYIEV (290 aa)) are vacuolar. Residues Asn-815, Asn-858, and Asn-892 are each glycosylated (N-linked (GlcNAc...) asparagine).

It belongs to the peptidase M28 family. Zn(2+) is required as a cofactor.

The protein localises to the vacuole membrane. Functionally, may be involved in vacuolar sorting and osmoregulation. The protein is Vacuolar membrane protease of Clavispora lusitaniae (strain ATCC 42720) (Yeast).